Consider the following 465-residue polypeptide: Phosphomannomutase/phosphoglucomutase (465 aa).

Residue S110 is the Phosphoserine intermediate of the active site. Mg(2+) contacts are provided by S110, D244, D246, and D248. Substrate-binding residues include E327, S329, and H331.

The protein belongs to the phosphohexose mutase family. Monomer. Mg(2+) is required as a cofactor.

It carries out the reaction alpha-D-mannose 1-phosphate = D-mannose 6-phosphate. The catalysed reaction is alpha-D-glucose 1-phosphate = alpha-D-glucose 6-phosphate. Its pathway is nucleotide-sugar biosynthesis; GDP-alpha-D-mannose biosynthesis; alpha-D-mannose 1-phosphate from D-fructose 6-phosphate: step 2/2. It participates in bacterial outer membrane biogenesis; lipopolysaccharide biosynthesis. Its function is as follows. The phosphomannomutase activity produces a precursor for alginate polymerization. The alginate layer causes a mucoid phenotype and provides a protective barrier against host immune defenses and antibiotics. Also involved in core-LPS biosynthesis due to its phosphoglucomutase activity. Essential for biofilm production. This chain is Phosphomannomutase/phosphoglucomutase (algC), found in Pseudomonas syringae pv. tomato (strain ATCC BAA-871 / DC3000).